We begin with the raw amino-acid sequence, 334 residues long: ADP-L-glycero-D-manno-heptose-6-epimerase (334 aa).

Residues 11-12 (FI), 32-33 (DN), lysine 39, lysine 54, 77-81 (QGACS), and asparagine 94 each bind NADP(+). The active-site Proton acceptor is tyrosine 141. Position 145 (lysine 145) interacts with NADP(+). Asparagine 171 lines the substrate pocket. Residues valine 172 and lysine 180 each coordinate NADP(+). Residue lysine 180 is the Proton acceptor of the active site. Substrate is bound by residues arginine 182, histidine 189, 203 to 206 (FGSN), arginine 216, and tyrosine 295.

This sequence belongs to the NAD(P)-dependent epimerase/dehydratase family. HldD subfamily. Homopentamer. Requires NADP(+) as cofactor.

The enzyme catalyses ADP-D-glycero-beta-D-manno-heptose = ADP-L-glycero-beta-D-manno-heptose. It functions in the pathway nucleotide-sugar biosynthesis; ADP-L-glycero-beta-D-manno-heptose biosynthesis; ADP-L-glycero-beta-D-manno-heptose from D-glycero-beta-D-manno-heptose 7-phosphate: step 4/4. Catalyzes the interconversion between ADP-D-glycero-beta-D-manno-heptose and ADP-L-glycero-beta-D-manno-heptose via an epimerization at carbon 6 of the heptose. In Neisseria meningitidis serogroup C (strain 053442), this protein is ADP-L-glycero-D-manno-heptose-6-epimerase.